Here is a 183-residue protein sequence, read N- to C-terminus: Microfibrillar-associated protein 2 (183 aa).

An N-terminal signal peptide occupies residues Met1–Ala17. At Gln18 the chain carries Pyrrolidone carboxylic acid. Gln20 is covalently cross-linked (Isoglutamyl lysine isopeptide (Gln-Lys) (interchain with K-?)). Tyr47, Tyr48, and Tyr50 each carry sulfotyrosine. The region spanning Cys153–Cys183 is the ShKT domain. 3 disulfides stabilise this stretch: Cys153–Cys183, Cys160–Cys176, and Cys169–Cys180.

Belongs to the MFAP family. In terms of assembly, forms a ternary complex with BGN and ELN. Interacts with FBN1 (via N-terminal domain) and FBN2. Post-translationally, O-glycosylated; glycans consist of Gal(beta1-3)GalNAc. In terms of processing, forms intermolecular disulfide bonds either with other MAGP-1 molecules or with other components of the microfibrils. Forms transglutaminase cross-links with tropoelastin.

The protein resides in the secreted. It is found in the extracellular space. It localises to the extracellular matrix. Functionally, component of the elastin-associated microfibrils. In Bos taurus (Bovine), this protein is Microfibrillar-associated protein 2 (MFAP2).